The primary structure comprises 1572 residues: Helicase SWR1 (1572 aa).

3 disordered regions span residues 61–94 (SLEQ…DKNN), 119–291 (CGRR…SLNT), and 304–323 (TSSS…QKKS). Polar residues-rich tracts occupy residues 82 to 94 (ISGT…DKNN) and 152 to 173 (TVVT…SSPK). Basic and acidic residues predominate over residues 179–192 (TADKKSKLNKRDSS). The span at 216-232 (SKARLKSSKAKSKKRAV) shows a compositional bias: basic residues. The segment covering 238–269 (LVRKQSPEIKNESKRTKADPTHTNDDGNDNRK) has biased composition (basic and acidic residues). Positions 282–291 (ESGLKTSLNT) are enriched in polar residues. Residues 424 to 496 (ISVYYKEQSK…EEKRKKNLAR (73 aa)) enclose the HSA domain. Disordered stretches follow at residues 555–604 (TYPS…GNDM), 624–675 (FGNE…PGLS), and 694–749 (FDAD…AADP). Over residues 558–568 (SEASDASSEFS) the composition is skewed to low complexity. Residues 569–583 (ANEESDGNSDIDDEM) show a composition bias toward acidic residues. Residues 590 to 602 (DSDKEGNTERIGN) are compositionally biased toward basic and acidic residues. A compositionally biased stretch (low complexity) spans 643 to 657 (DSVSDSMEDSLSSSE). Residues 694-705 (FDADSSSDDGLD) are compositionally biased toward acidic residues. Basic and acidic residues predominate over residues 726-737 (SDNELKDEKAET). Residues 777-942 (ASLYNNKTNG…WSLLYFLMPQ (166 aa)) form the Helicase ATP-binding domain. Residue 790–797 (DEMGLGKT) participates in ATP binding. The short motif at 893-896 (DEAH) is the DEAH box element. The region spanning 1314-1464 (KLAQLLQNLK…NVVIQTGDFT (151 aa)) is the Helicase C-terminal domain. A disordered region spans residues 1505–1556 (AEDEDDAKAAKSALREVNVDNEDFQEGSVAAQDGNSDNENNEDSEDEYGGTS). The segment covering 1511–1522 (AKAAKSALREVN) has biased composition (basic and acidic residues). Acidic residues predominate over residues 1543 to 1552 (ENNEDSEDEY).

The protein belongs to the SNF2/RAD54 helicase family. SWR1 subfamily. As to quaternary structure, component of the SWR1 chromatin-remodeling complex.

It localises to the nucleus. The catalysed reaction is ATP + H2O = ADP + phosphate + H(+). Its function is as follows. Catalytic component of the SWR1 complex which mediates the ATP-dependent exchange of histone H2A for the H2A variant HZT1 leading to transcriptional regulation of selected genes by chromatin remodeling. This Kluyveromyces lactis (strain ATCC 8585 / CBS 2359 / DSM 70799 / NBRC 1267 / NRRL Y-1140 / WM37) (Yeast) protein is Helicase SWR1 (SWR1).